Reading from the N-terminus, the 808-residue chain is Enhancer of polycomb homolog 2 (808 aa).

Residues lysine 135, lysine 195, and lysine 324 each participate in a glycyl lysine isopeptide (Lys-Gly) (interchain with G-Cter in SUMO2) cross-link. Residues tyrosine 337–leucine 357 are disordered. Lysine 362 is covalently cross-linked (Glycyl lysine isopeptide (Lys-Gly) (interchain with G-Cter in SUMO2)). Disordered stretches follow at residues glutamine 371–serine 397, glutamine 595–lysine 630, and valine 645–threonine 682. The segment covering glutamine 595–glutamine 614 has biased composition (low complexity). Polar residues-rich tracts occupy residues threonine 615 to lysine 630 and glutamate 658 to threonine 682. Serine 755 bears the Phosphoserine mark.

It belongs to the enhancer of polycomb family.

The protein localises to the nucleus. Functionally, may play a role in transcription or DNA repair. This chain is Enhancer of polycomb homolog 2 (Epc2), found in Mus musculus (Mouse).